Here is a 194-residue protein sequence, read N- to C-terminus: Kallikrein-like enzyme LV-Ka (194 aa).

Disulfide bonds link C7–C99, C44–C192, C78–C146, C110–C125, and C136–C161. The Peptidase S1 domain maps to 36-185; sequence LNQEDKFICP…YTEWIQSIIA (150 aa). S140 acts as the Charge relay system in catalysis.

It belongs to the peptidase S1 family. Snake venom subfamily. In terms of assembly, monomer. Post-translationally, N-glycosylated. In terms of tissue distribution, expressed by the venom gland.

It localises to the secreted. Its activity is regulated as follows. Completely inhibited by the serine protease inhibitors NPGB and PMSF, partially inhibited by benzamidines, and weakly or not inhibited by SBTI and EDTA. Shows kallikrein-like activity, releasing bradykinin from kininogen. Also activates plasminogen, which is also a plasma kallikrein activity. Is active upon the kallikrein substrates S-2266 and S-2302, suggesting a preference for Arg in P1 position. In vivo, lowers blood pressure after intravenous injection in rat. The sequence is that of Kallikrein-like enzyme LV-Ka from Lachesis muta muta (Bushmaster).